Consider the following 91-residue polypeptide: Putative membrane protein insertion efficiency factor (91 aa).

Residues 72 to 91 (SGGNDPVPEKLTHINHQHEK) are disordered. Over residues 78-91 (VPEKLTHINHQHEK) the composition is skewed to basic and acidic residues.

The protein belongs to the UPF0161 family.

Its subcellular location is the cell inner membrane. Could be involved in insertion of integral membrane proteins into the membrane. This is Putative membrane protein insertion efficiency factor from Pseudoalteromonas translucida (strain TAC 125).